The chain runs to 346 residues: Phosphoribosylformylglycinamidine cyclo-ligase (346 aa).

This sequence belongs to the AIR synthase family.

It localises to the cytoplasm. It catalyses the reaction 2-formamido-N(1)-(5-O-phospho-beta-D-ribosyl)acetamidine + ATP = 5-amino-1-(5-phospho-beta-D-ribosyl)imidazole + ADP + phosphate + H(+). Its pathway is purine metabolism; IMP biosynthesis via de novo pathway; 5-amino-1-(5-phospho-D-ribosyl)imidazole from N(2)-formyl-N(1)-(5-phospho-D-ribosyl)glycinamide: step 2/2. The sequence is that of Phosphoribosylformylglycinamidine cyclo-ligase from Methylobacillus flagellatus (strain ATCC 51484 / DSM 6875 / VKM B-1610 / KT).